We begin with the raw amino-acid sequence, 93 residues long: Putative septation protein SpoVG (93 aa).

This sequence belongs to the SpoVG family.

In terms of biological role, could be involved in septation. In Fusobacterium nucleatum subsp. nucleatum (strain ATCC 25586 / DSM 15643 / BCRC 10681 / CIP 101130 / JCM 8532 / KCTC 2640 / LMG 13131 / VPI 4355), this protein is Putative septation protein SpoVG.